The sequence spans 332 residues: 5-dehydro-2-deoxygluconokinase (332 aa).

This sequence belongs to the carbohydrate kinase PfkB family.

It catalyses the reaction 5-dehydro-2-deoxy-D-gluconate + ATP = 6-phospho-5-dehydro-2-deoxy-D-gluconate + ADP + H(+). It participates in polyol metabolism; myo-inositol degradation into acetyl-CoA; acetyl-CoA from myo-inositol: step 5/7. Catalyzes the phosphorylation of 5-dehydro-2-deoxy-D-gluconate (2-deoxy-5-keto-D-gluconate or DKG) to 6-phospho-5-dehydro-2-deoxy-D-gluconate (DKGP). The polypeptide is 5-dehydro-2-deoxygluconokinase (Bacillus thuringiensis subsp. konkukian (strain 97-27)).